Consider the following 281-residue polypeptide: Ribosomal RNA small subunit methyltransferase A (281 aa).

Residues asparagine 25, leucine 27, glycine 52, glutamate 73, aspartate 99, and asparagine 118 each contribute to the S-adenosyl-L-methionine site.

This sequence belongs to the class I-like SAM-binding methyltransferase superfamily. rRNA adenine N(6)-methyltransferase family. RsmA subfamily.

The protein localises to the cytoplasm. It carries out the reaction adenosine(1518)/adenosine(1519) in 16S rRNA + 4 S-adenosyl-L-methionine = N(6)-dimethyladenosine(1518)/N(6)-dimethyladenosine(1519) in 16S rRNA + 4 S-adenosyl-L-homocysteine + 4 H(+). Specifically dimethylates two adjacent adenosines (A1518 and A1519) in the loop of a conserved hairpin near the 3'-end of 16S rRNA in the 30S particle. May play a critical role in biogenesis of 30S subunits. This Erythrobacter litoralis (strain HTCC2594) protein is Ribosomal RNA small subunit methyltransferase A.